The chain runs to 293 residues: GPN-loop GTPase 3 (293 aa).

GTP is bound at residue 13-18 (GAGKST). The Gly-Pro-Asn (GPN)-loop; involved in dimer interface signature appears at 70–72 (GPN). Residue 176-179 (SKMD) participates in GTP binding. Basic and acidic residues predominate over residues 272-281 (HEAQEPREPN). A disordered region spans residues 272 to 293 (HEAQEPREPNDEQDVDYEDADI). Positions 282–293 (DEQDVDYEDADI) are enriched in acidic residues.

The protein belongs to the GPN-loop GTPase family. Heterodimers with gpn1 or gpn2. Binds to RNA polymerase II (RNAPII).

In terms of biological role, small GTPase required for proper nuclear import of RNA polymerase II and III (RNAPII and RNAPIII). May act at an RNAP assembly step prior to nuclear import. In Aspergillus fumigatus (strain ATCC MYA-4609 / CBS 101355 / FGSC A1100 / Af293) (Neosartorya fumigata), this protein is GPN-loop GTPase 3.